The primary structure comprises 330 residues: Ribosomal RNA small subunit methyltransferase H (330 aa).

Residues 51 to 53, Asp-70, Asp-118, and Gln-125 each bind S-adenosyl-L-methionine; that span reads GGH. The disordered stretch occupies residues 276–330; that stretch reads STDSTPPGLPVPLPDRQPELRLLTRGAELPTEQETAANPRAASARLRAAERTREP. Positions 311–321 are enriched in low complexity; the sequence is AANPRAASARL.

The protein belongs to the methyltransferase superfamily. RsmH family.

Its subcellular location is the cytoplasm. The enzyme catalyses cytidine(1402) in 16S rRNA + S-adenosyl-L-methionine = N(4)-methylcytidine(1402) in 16S rRNA + S-adenosyl-L-homocysteine + H(+). Functionally, specifically methylates the N4 position of cytidine in position 1402 (C1402) of 16S rRNA. The chain is Ribosomal RNA small subunit methyltransferase H from Thermobifida fusca (strain YX).